The chain runs to 349 residues: MALVTTPTVNDGPLFAEVNMSSDFNAPTVRATVVQASTIFYDTPATLDKAERLLAEAASYGAQIVVFPEAFIGGYPRGSNFGVSIGNRTAKGKEDFRKYHSAAIDVPGPEVDRLAALAGKYKVYLVMGVIERDGYTLYCTVLFFGAQGRYLGKHRKLMPTALERIIWGFGDGSTIPVFETPIGKIGAAICWENKMPLLRTAMYAKGVEIYCAPTADSREVWQASMTHIALEGGCFVLSANQFCRRRDYPPPPEYVFEGTEENLTPDSVVCAGGSVIISPSGAVLAGPSYEGEALISADLDLGEIARAKFDFDVVGHYSRPEVLSLVVKDHPTNPVTFTSASTKIEDKTK.

The region spanning 29–301 (VRATVVQAST…EALISADLDL (273 aa)) is the CN hydrolase domain. Glu-69 serves as the catalytic Proton acceptor. Lys-156 is an active-site residue. Catalysis depends on Cys-190, which acts as the Nucleophile.

This sequence belongs to the carbon-nitrogen hydrolase superfamily. Nitrilase family. Ubiquitous.

It carries out the reaction L-asparagine = 3-cyano-L-alanine + H2O. The enzyme catalyses 3-cyano-L-alanine + 2 H2O = L-aspartate + NH4(+). In terms of biological role, involved in the cyanide detoxification pathway. Has nitrilase and nitrile-hydratase activity in the ratio 4.0:1, producing both asparagine and aspartic acid from beta-cyano-L-alanine (Ala(CN)). Can also use 3-phenylpropionitrile as substrate, but not indole-3-acetonitrile. This chain is Bifunctional nitrilase/nitrile hydratase NIT4A (NIT4A), found in Lupinus angustifolius (Narrow-leaved blue lupine).